The sequence spans 417 residues: Serine hydroxymethyltransferase (417 aa).

(6S)-5,6,7,8-tetrahydrofolate is bound by residues Leu-121 and 125-127; that span reads GHL. Lys-229 carries the post-translational modification N6-(pyridoxal phosphate)lysine. 355–357 provides a ligand contact to (6S)-5,6,7,8-tetrahydrofolate; sequence SPF.

This sequence belongs to the SHMT family. In terms of assembly, homodimer. Pyridoxal 5'-phosphate serves as cofactor.

It is found in the cytoplasm. The catalysed reaction is (6R)-5,10-methylene-5,6,7,8-tetrahydrofolate + glycine + H2O = (6S)-5,6,7,8-tetrahydrofolate + L-serine. It participates in one-carbon metabolism; tetrahydrofolate interconversion. The protein operates within amino-acid biosynthesis; glycine biosynthesis; glycine from L-serine: step 1/1. In terms of biological role, catalyzes the reversible interconversion of serine and glycine with tetrahydrofolate (THF) serving as the one-carbon carrier. This reaction serves as the major source of one-carbon groups required for the biosynthesis of purines, thymidylate, methionine, and other important biomolecules. Also exhibits THF-independent aldolase activity toward beta-hydroxyamino acids, producing glycine and aldehydes, via a retro-aldol mechanism. This Aeromonas salmonicida (strain A449) protein is Serine hydroxymethyltransferase.